The sequence spans 553 residues: Putative transport protein YidE (553 aa).

Helical transmembrane passes span 4–24 (IALT…IGNV), 28–48 (GVGL…HFVS), 65–85 (FGLI…FFAS), 95–115 (LFAV…HKLF), and 158–178 (MSYA…MWML). 2 consecutive RCK C-terminal domains span residues 191–276 (QQHE…VIGQ) and 279–361 (DTSL…VLGN). The next 6 membrane-spanning stretches (helical) occupy residues 371–391 (MLPV…PVFV), 393–413 (GFPA…ALIL), 439–459 (IVLF…HTLV), 464–484 (LSWI…VGIL), 493–513 (YLTM…LAFA), and 533–553 (LVMF…WSIG).

It belongs to the AAE transporter (TC 2.A.81) family. YidE subfamily.

It is found in the cell membrane. The polypeptide is Putative transport protein YidE (Escherichia coli O127:H6 (strain E2348/69 / EPEC)).